The primary structure comprises 121 residues: MEAKAQARFVRVTPQKARRVVDTIRGKGAAEAVAVLSFAPQAAAETVRKVVESAVANARVKADTASVRFDPADLVIAEAYVDEGPTLKRFRPRAQGRANQVLKRTSHITVIVAERQKEGAR.

This sequence belongs to the universal ribosomal protein uL22 family. As to quaternary structure, part of the 50S ribosomal subunit.

Functionally, this protein binds specifically to 23S rRNA; its binding is stimulated by other ribosomal proteins, e.g. L4, L17, and L20. It is important during the early stages of 50S assembly. It makes multiple contacts with different domains of the 23S rRNA in the assembled 50S subunit and ribosome. The globular domain of the protein is located near the polypeptide exit tunnel on the outside of the subunit, while an extended beta-hairpin is found that lines the wall of the exit tunnel in the center of the 70S ribosome. The polypeptide is Large ribosomal subunit protein uL22 (Beutenbergia cavernae (strain ATCC BAA-8 / DSM 12333 / CCUG 43141 / JCM 11478 / NBRC 16432 / NCIMB 13614 / HKI 0122)).